A 185-amino-acid polypeptide reads, in one-letter code: Small ribosomal subunit protein uS5 (185 aa).

One can recognise an S5 DRBM domain in the interval 18–81; sequence FVDKLVHINR…ESAKRALIRV (64 aa). Positions 157–185 are disordered; that stretch reads SPRSVAARRGIKVSQLQSRRRVEDAEATD. Residues 176–185 are compositionally biased toward basic and acidic residues; the sequence is RRVEDAEATD.

The protein belongs to the universal ribosomal protein uS5 family. As to quaternary structure, part of the 30S ribosomal subunit. Contacts proteins S4 and S8.

With S4 and S12 plays an important role in translational accuracy. In terms of biological role, located at the back of the 30S subunit body where it stabilizes the conformation of the head with respect to the body. In Xanthobacter autotrophicus (strain ATCC BAA-1158 / Py2), this protein is Small ribosomal subunit protein uS5.